The primary structure comprises 89 residues: MAKESMKAREVKRENTVAKYAEKRKALKEAGDFVGLQKLPKNASPVRMHNRCKLTGRPRGYMRQFGISRVTFREMANNGLIPGVKKASW.

This sequence belongs to the universal ribosomal protein uS14 family. As to quaternary structure, part of the 30S ribosomal subunit. Contacts proteins S3 and S10.

In terms of biological role, binds 16S rRNA, required for the assembly of 30S particles and may also be responsible for determining the conformation of the 16S rRNA at the A site. The protein is Small ribosomal subunit protein uS14 of Flavobacterium psychrophilum (strain ATCC 49511 / DSM 21280 / CIP 103535 / JIP02/86).